Reading from the N-terminus, the 327-residue chain is Spermidine/putrescine import ATP-binding protein PotA (327 aa).

One can recognise an ABC transporter domain in the interval 5–235 (IKVEAVEKHF…PKTLFVATFI (231 aa)). ATP is bound at residue 37-44 (GPSGCGKT).

This sequence belongs to the ABC transporter superfamily. Spermidine/putrescine importer (TC 3.A.1.11.1) family. In terms of assembly, the complex is composed of two ATP-binding proteins (PotA), two transmembrane proteins (PotB and PotC) and a solute-binding protein (PotD).

It is found in the cell membrane. It catalyses the reaction ATP + H2O + polyamine-[polyamine-binding protein]Side 1 = ADP + phosphate + polyamineSide 2 + [polyamine-binding protein]Side 1.. Its function is as follows. Part of the ABC transporter complex PotABCD involved in spermidine/putrescine import. Responsible for energy coupling to the transport system. This chain is Spermidine/putrescine import ATP-binding protein PotA, found in Bacillus cereus (strain ATCC 14579 / DSM 31 / CCUG 7414 / JCM 2152 / NBRC 15305 / NCIMB 9373 / NCTC 2599 / NRRL B-3711).